A 366-amino-acid chain; its full sequence is RNA 3'-terminal phosphate cyclase (366 aa).

Residues Gln104, Pro131, Tyr294, Asp297, Gln298, and His320 each coordinate ATP. His320 (tele-AMP-histidine intermediate) is an active-site residue.

Belongs to the RNA 3'-terminal cyclase family. Type 1 subfamily.

It localises to the nucleus. The protein localises to the nucleoplasm. It catalyses the reaction a 3'-end 3'-phospho-ribonucleotide-RNA + ATP = a 3'-end 2',3'-cyclophospho-ribonucleotide-RNA + AMP + diphosphate. Functionally, catalyzes the conversion of 3'-phosphate to a 2',3'-cyclic phosphodiester at the end of RNA. The mechanism of action of the enzyme occurs in 3 steps: (A) adenylation of the enzyme by ATP; (B) transfer of adenylate to an RNA-N3'P to produce RNA-N3'PP5'A; (C) and attack of the adjacent 2'-hydroxyl on the 3'-phosphorus in the diester linkage to produce the cyclic end product. Likely functions in some aspects of cellular RNA processing. Function plays an important role in regulating axon regeneration by inhibiting central nervous system (CNS) axon regeneration following optic nerve injury. The polypeptide is RNA 3'-terminal phosphate cyclase (RTCA) (Macaca fascicularis (Crab-eating macaque)).